The sequence spans 454 residues: Chromosomal replication initiator protein DnaA (454 aa).

The interval 1–71 is domain I, interacts with DnaA modulators; it reads MTKEQWGQLQ…HEVRQEDPAV (71 aa). The domain II stretch occupies residues 71-112; that stretch reads VRRLRFAVPSHVNATTKPARPAQATAPRAPAEKTPRSTLSTA. Residues 82–108 form a disordered region; the sequence is VNATTKPARPAQATAPRAPAEKTPRST. The span at 84-99 shows a compositional bias: low complexity; that stretch reads ATTKPARPAQATAPRA. Positions 113–334 are domain III, AAA+ region; sequence PLDARFTFDN…GALTRLCAFA (222 aa). Positions 157, 159, 160, and 161 each coordinate ATP. The domain IV, binds dsDNA stretch occupies residues 335–454; the sequence is SLVGREIDME…LELLRRALEE (120 aa).

The protein belongs to the DnaA family. In terms of assembly, oligomerizes as a right-handed, spiral filament on DNA at oriC.

It is found in the cytoplasm. In terms of biological role, plays an essential role in the initiation and regulation of chromosomal replication. ATP-DnaA binds to the origin of replication (oriC) to initiate formation of the DNA replication initiation complex once per cell cycle. Binds the DnaA box (a 9 base pair repeat at the origin) and separates the double-stranded (ds)DNA. Forms a right-handed helical filament on oriC DNA; dsDNA binds to the exterior of the filament while single-stranded (ss)DNA is stabiized in the filament's interior. The ATP-DnaA-oriC complex binds and stabilizes one strand of the AT-rich DNA unwinding element (DUE), permitting loading of DNA polymerase. After initiation quickly degrades to an ADP-DnaA complex that is not apt for DNA replication. Binds acidic phospholipids. This Roseobacter denitrificans (strain ATCC 33942 / OCh 114) (Erythrobacter sp. (strain OCh 114)) protein is Chromosomal replication initiator protein DnaA.